Reading from the N-terminus, the 380-residue chain is MLIPSSSSIPSSLSASASDSEPSSLNGSGISDQNILPNYHLHHHLINENEMEAANYAQVIKPTCEAFQDWPHTPMLYQQPQLHFMLPQHDWAYPHLAQSLPPPHHLTPSTAAVAAATIASQSSIINQTSVVTSTPSCQIKQEVERPEIIQRLMPPWPPAYQFSCDDSGSVSGAGGPHQPLSDISDDSEQTCPDDLEGFAKQFKQRRIKLGYTQADVGVALGTLYGNIFSQTTICRFEALQLSFKNMCKLKPLLFKWLEEADSTTGSPNSTFEKMTGQAGRKRKKRTSIEVNVKSRLEFHFQSNQKPNAQEITQVAMELQLEKEVVRVWFCNRRQKEKRIAPNQYDAPHPMALNNGYPMTADLFPYQAVVNHYTQQSPRQQ.

Residues 1 to 25 (MLIPSSSSIPSSLSASASDSEPSSL) show a composition bias toward low complexity. 3 disordered regions span residues 1–31 (MLIP…SGIS), 167–190 (SGSV…SEQT), and 265–286 (GSPN…KKRT). In terms of domain architecture, POU-specific spans 187–261 (SEQTCPDDLE…LLFKWLEEAD (75 aa)). A DNA-binding region (homeobox) is located at residues 281-340 (KRKKRTSIEVNVKSRLEFHFQSNQKPNAQEITQVAMELQLEKEVVRVWFCNRRQKEKRIA).

The protein belongs to the POU transcription factor family. Class-3 subfamily. Interacts with egl-27, sox-2 and sem-4. Interacts with wdr-5.1. In terms of tissue distribution, expressed in a series of neurons in the ring ganglia, excretory cell, dividing neuroblasts in the ventral cord and rectal cells.

Its subcellular location is the nucleus. Vital for embryonic development and essential for the proper function of the excretory cell. Required for the transdifferentiation of the Y rectal epithelial cell to the PDA motor neuron during larval development. The protein is Homeobox protein ceh-6 of Caenorhabditis elegans.